A 572-amino-acid chain; its full sequence is Phosphoglucomutase-2 (572 aa).

Residues Thr23, Arg27, 126–127 (SH), and Lys140 contribute to the substrate site. Ser126 (phosphoserine intermediate) is an active-site residue. Ser126 is a Mg(2+) binding site. Residues Asp308, Asp310, and Asp312 each coordinate Mg(2+). Residues 312-313 (DR), Thr373, 392-394 (EES), Lys405, and Arg527 contribute to the substrate site.

It belongs to the phosphohexose mutase family. Mg(2+) serves as cofactor. Phosphorylated via a calcium-dependent protein kinase.

Its subcellular location is the cytoplasm. It catalyses the reaction alpha-D-glucose 1-phosphate = alpha-D-glucose 6-phosphate. May be involved in membrane fusion in exocytosis. This Paramecium tetraurelia protein is Phosphoglucomutase-2 (pp63-2).